The sequence spans 162 residues: Large ribosomal subunit protein uL10 (162 aa).

The protein belongs to the universal ribosomal protein uL10 family. Part of the ribosomal stalk of the 50S ribosomal subunit. The N-terminus interacts with L11 and the large rRNA to form the base of the stalk. The C-terminus forms an elongated spine to which L12 dimers bind in a sequential fashion forming a multimeric L10(L12)X complex.

Forms part of the ribosomal stalk, playing a central role in the interaction of the ribosome with GTP-bound translation factors. The sequence is that of Large ribosomal subunit protein uL10 (rplJ) from Mycoplasma genitalium (strain ATCC 33530 / DSM 19775 / NCTC 10195 / G37) (Mycoplasmoides genitalium).